Consider the following 190-residue polypeptide: Peptidyl-tRNA hydrolase (190 aa).

Residue Tyr-19 coordinates tRNA. Residue His-24 is the Proton acceptor of the active site. Positions 72, 74, and 121 each coordinate tRNA.

Belongs to the PTH family.

It is found in the mitochondrion. The catalysed reaction is an N-acyl-L-alpha-aminoacyl-tRNA + H2O = an N-acyl-L-amino acid + a tRNA + H(+). Its function is as follows. Peptidyl-tRNA hydrolase involved in the recycling of tRNA-Lys from diacetyl-lysyl-tRNA-Lys and is important for mitochondrial function. This chain is Peptidyl-tRNA hydrolase (PTH1), found in Saccharomyces cerevisiae (strain ATCC 204508 / S288c) (Baker's yeast).